Here is a 793-residue protein sequence, read N- to C-terminus: Phenylalanine--tRNA ligase beta subunit (793 aa).

In terms of domain architecture, tRNA-binding spans 40-159 (SKLNTKLVIG…MDEMVGREIS (120 aa)). Residues 401–476 (NYDNVYSITL…RLYGYDNIIE (76 aa)) form the B5 domain. Residues D454, D460, E463, and E464 each contribute to the Mg(2+) site. Residues 701–793 (SKFQKSTRDI…NLKELKVKVR (93 aa)) form the FDX-ACB domain.

It belongs to the phenylalanyl-tRNA synthetase beta subunit family. Type 1 subfamily. As to quaternary structure, tetramer of two alpha and two beta subunits. Requires Mg(2+) as cofactor.

The protein localises to the cytoplasm. It carries out the reaction tRNA(Phe) + L-phenylalanine + ATP = L-phenylalanyl-tRNA(Phe) + AMP + diphosphate + H(+). The protein is Phenylalanine--tRNA ligase beta subunit of Mesoplasma florum (strain ATCC 33453 / NBRC 100688 / NCTC 11704 / L1) (Acholeplasma florum).